The primary structure comprises 125 residues: Small ribosomal subunit protein uS12 (125 aa).

At D89 the chain carries 3-methylthioaspartic acid. The tract at residues 106–125 (GVKDRKQSRSKYGAKRPKKA) is disordered. A compositionally biased stretch (basic residues) spans 113–125 (SRSKYGAKRPKKA).

This sequence belongs to the universal ribosomal protein uS12 family. Part of the 30S ribosomal subunit. Contacts proteins S8 and S17. May interact with IF1 in the 30S initiation complex.

With S4 and S5 plays an important role in translational accuracy. Functionally, interacts with and stabilizes bases of the 16S rRNA that are involved in tRNA selection in the A site and with the mRNA backbone. Located at the interface of the 30S and 50S subunits, it traverses the body of the 30S subunit contacting proteins on the other side and probably holding the rRNA structure together. The combined cluster of proteins S8, S12 and S17 appears to hold together the shoulder and platform of the 30S subunit. This chain is Small ribosomal subunit protein uS12, found in Aromatoleum aromaticum (strain DSM 19018 / LMG 30748 / EbN1) (Azoarcus sp. (strain EbN1)).